Here is a 238-residue protein sequence, read N- to C-terminus: Zinc import ATP-binding protein ZnuC (238 aa).

The ABC transporter domain occupies 5–220; it reads VKLKNVCVNL…LEFISIFGLK (216 aa). Position 37–44 (37–44) interacts with ATP; it reads GPNGAGKS.

The protein belongs to the ABC transporter superfamily. Zinc importer (TC 3.A.1.15.5) family. The complex is composed of two ATP-binding proteins (ZnuC), two transmembrane proteins (ZnuB) and a solute-binding protein (ZnuA).

Its subcellular location is the cell inner membrane. The enzyme catalyses Zn(2+)(out) + ATP(in) + H2O(in) = Zn(2+)(in) + ADP(in) + phosphate(in) + H(+)(in). Its function is as follows. Part of the ABC transporter complex ZnuABC involved in zinc import. Responsible for energy coupling to the transport system. This Buchnera aphidicola subsp. Acyrthosiphon pisum (strain APS) (Acyrthosiphon pisum symbiotic bacterium) protein is Zinc import ATP-binding protein ZnuC.